Reading from the N-terminus, the 553-residue chain is Glutamyl-tRNA(Gln) amidotransferase subunit B, mitochondrial (553 aa).

Residues 1–18 (MAASTSGYSGVLFRLRKY) constitute a mitochondrion transit peptide.

Belongs to the GatB/GatE family. GatB subfamily. As to quaternary structure, subunit of the heterotrimeric GatCAB amidotransferase (AdT) complex, composed of A (qrsl1), B (gatb) and C (gatc) subunits.

Its subcellular location is the mitochondrion. The catalysed reaction is L-glutamyl-tRNA(Gln) + L-glutamine + ATP + H2O = L-glutaminyl-tRNA(Gln) + L-glutamate + ADP + phosphate + H(+). Its function is as follows. Allows the formation of correctly charged Gln-tRNA(Gln) through the transamidation of misacylated Glu-tRNA(Gln) in the mitochondria. The reaction takes place in the presence of glutamine and ATP through an activated gamma-phospho-Glu-tRNA(Gln). The chain is Glutamyl-tRNA(Gln) amidotransferase subunit B, mitochondrial from Danio rerio (Zebrafish).